Reading from the N-terminus, the 342-residue chain is Dihydroorotase (342 aa).

Residues H13 and H15 each contribute to the Zn(2+) site. Residues 15–17 (HLR) and N41 each bind substrate. The Zn(2+) site is built by K98, H135, and H173. At K98 the chain carries N6-carboxylysine. H135 provides a ligand contact to substrate. Residue L218 coordinates substrate. D246 serves as a coordination point for Zn(2+). D246 is a catalytic residue. Substrate is bound by residues H250 and A262.

Belongs to the metallo-dependent hydrolases superfamily. DHOase family. Class II DHOase subfamily. Homodimer. The cofactor is Zn(2+).

The catalysed reaction is (S)-dihydroorotate + H2O = N-carbamoyl-L-aspartate + H(+). The protein operates within pyrimidine metabolism; UMP biosynthesis via de novo pathway; (S)-dihydroorotate from bicarbonate: step 3/3. Its function is as follows. Catalyzes the reversible cyclization of carbamoyl aspartate to dihydroorotate. The sequence is that of Dihydroorotase from Aliivibrio fischeri (strain MJ11) (Vibrio fischeri).